Here is a 523-residue protein sequence, read N- to C-terminus: Uridylate cyclase (523 aa).

Guanylate cyclase domains lie at V69–A209 and M318–R438. A ribonucleoside 5'-triphosphate is bound by residues Y72 and R125. 3 residues coordinate Mn(2+): D323, I324, and D372.

The protein belongs to the adenylyl cyclase class-4/guanylyl cyclase family. Pyrimidine cyclase subfamily. In terms of assembly, monomer. Mn(2+) serves as cofactor.

It localises to the cytoplasm. It catalyses the reaction UTP = 3',5'-cyclic UMP + diphosphate. Functionally, pycsar (pyrimidine cyclase system for antiphage resistance) provides immunity against bacteriophage. The pyrimidine cyclase (PycC) synthesizes cyclic nucleotides in response to infection; these serve as specific second messenger signals. The signals activate the nearby effector, leading to bacterial cell death and abortive phage infection. A clade A Pycsar system. Its function is as follows. The pyrimidine cyclase gene of a two-gene Pycsar system, generates cyclic UMP (cUMP) from UTP, has little to no activity on ATP, CTP or GTP. Expression of this and effector RsPycTM (AC A0A4R2UGS4) probably confers resistance to some bacteriophage. The genes are probably only expressed in response to bacteriophage infection. In Rhizobium sp. (strain PP-F2F-G36), this protein is Uridylate cyclase.